We begin with the raw amino-acid sequence, 1701 residues long: Rho guanine nucleotide exchange factor TIAM2 (1701 aa).

4 disordered regions span residues 1–21 (MGNS…NTIT), 201–250 (SPTL…SSWY), 265–293 (GSFL…FNQS), and 389–417 (SLSR…DGLN). Gly-2 carries N-myristoyl glycine lipidation. The segment covering 238 to 248 (SKGSSLSSESS) has biased composition (low complexity). Basic and acidic residues predominate over residues 397–413 (LQEPRSKEGSDYFDSRS). One can recognise a PH 1 domain in the interval 506-620 (VVRKAGWLFF…WVTAVHSACA (115 aa)). Residues 628–695 (GKEDTLRLLK…KFHMDLFRMR (68 aa)) are a coiled coil. Positions 810-881 (IQTYVHFQDN…YMQQQVYDEI (72 aa)) constitute an RBD domain. Residues 890 to 976 (DVQLTKTGSV…GLTLIARPPD (87 aa)) form the PDZ domain. The interval 1070-1092 (DSQANGMEGPRENQDPPPRSLAR) is disordered. The DH domain maps to 1099 to 1293 (RLRKVIQELV…EKVASHINEM (195 aa)). The PH 2 domain occupies 1347 to 1478 (DLELTVFVFK…EKTCKDRLVP (132 aa)). 2 disordered regions span residues 1500-1556 (NSSS…GLAD) and 1568-1628 (LSDE…PKLV). Residues 1513 to 1527 (GTLLDSDEGSLSSGT) show a composition bias toward low complexity. A Phosphoserine modification is found at Ser-1583. The span at 1596-1607 (RISEDPDVHPEA) shows a compositional bias: basic and acidic residues. Thr-1648 bears the Phosphothreonine mark.

It belongs to the TIAM family. Interacts with MAP1A, MAP1B, PARP1 and YWHAE. Interacts with CD44, PARD3 and MAPK8IP2. Post-translationally, phosphorylated on serine and threonine residues. Phosphorylated on Thr-1648 by Rho-kinase. Its phosphorylation by Rho-kinase inhibits its guanine nucleotide exchange activity, its interaction with MAP1A, MAP1B, PARP1 and YWHAE and reduces its ability to promote neurite growth. In terms of tissue distribution, expressed in the occipital, frontal and temporal lobes, cerebellum, putamen and testis.

The protein localises to the cytoplasm. It localises to the cell projection. Its subcellular location is the lamellipodium. The protein resides in the filopodium. It is found in the growth cone. The protein localises to the neuron projection. It localises to the perikaryon. In terms of biological role, modulates the activity of RHO-like proteins and connects extracellular signals to cytoskeletal activities. Acts as a GDP-dissociation stimulator protein that stimulates the GDP-GTP exchange activity of RHO-like GTPases and activates them. Mediates extracellular laminin signals to activate Rac1, contributing to neurite growth. Involved in lamellipodial formation and advancement of the growth cone of embryonic hippocampal neurons. Promotes migration of neurons in the cerebral cortex. When overexpressed, induces membrane ruffling accompanied by the accumulation of actin filaments along the altered plasma membrane. Activates specifically RAC1, but not CDC42 and RHOA. The polypeptide is Rho guanine nucleotide exchange factor TIAM2 (TIAM2) (Homo sapiens (Human)).